Consider the following 52-residue polypeptide: Large ribosomal subunit protein bL32c (52 aa).

It belongs to the bacterial ribosomal protein bL32 family.

It localises to the plastid. It is found in the chloroplast. This Arabis hirsuta (Hairy rock-cress) protein is Large ribosomal subunit protein bL32c.